The following is a 647-amino-acid chain: Epithelial sodium channel subunit beta (647 aa).

Residues 1-57 (MIHGKMKRLKRYFTRALHRIQKGPGYTYKELLVWFCDNTNTHGPKRIIKEGPKKRVM) lie on the Cytoplasmic side of the membrane. A helical transmembrane segment spans residues 58 to 78 (WFILTLVFAGLVFWQWGVLIL). Topologically, residues 79 to 552 (TYLSYGVSVS…GGQFGFWMGG (474 aa)) are extracellular. 8 disulfides stabilise this stretch: C104–C291, C215–C222, C268–C275, C381–C468, C406–C464, C410–C460, C419–C446, and C421–C435. A helical membrane pass occupies residues 553-573 (SVLCIIEFGEIIIDCMWITIL). At 574–647 (KFLAWSRNRR…AEPVSSDEEN (74 aa)) the chain is on the cytoplasmic side. Residues 586 to 647 (RKRPQYSDPP…AEPVSSDEEN (62 aa)) form a disordered region.

Belongs to the amiloride-sensitive sodium channel (TC 1.A.6) family. SCNN1B subfamily. Component of the heterotrimeric epithelial sodium channel (ENaC) composed of an alpha/SCNN1A, a beta/SCNN1B and a gamma/SCNN1G subunit.

It localises to the apical cell membrane. Its subcellular location is the cytoplasmic vesicle membrane. It carries out the reaction Na(+)(in) = Na(+)(out). Its activity is regulated as follows. Originally identified and characterized by its inhibition by the diuretic drug amiloride. This is one of the three pore-forming subunits of the heterotrimeric epithelial sodium channel (ENaC), a critical regulator of sodium balance and fluid homeostasis. ENaC operates in epithelial tissues, where it mediates the electrodiffusion of sodium ions from extracellular fluid through the apical membrane of cells, with water following osmotically. In Xenopus laevis (African clawed frog), this protein is Epithelial sodium channel subunit beta (scnn1b-a).